A 143-amino-acid chain; its full sequence is MAKKIEAYIKLQVPAGQANPSPPVGPALGQHGLNIMEFCKAFNAQTQEMEGGLPIPVVITVYSDRSFTFVTKTPPAPVLLLKAIGAKGGSGTPNTKKVGTVQRDQLEEIARTKWPDLNASDMDAAVRSIAGTARSMGIDVEGV.

The protein belongs to the universal ribosomal protein uL11 family. Part of the ribosomal stalk of the 50S ribosomal subunit. Interacts with L10 and the large rRNA to form the base of the stalk. L10 forms an elongated spine to which L12 dimers bind in a sequential fashion forming a multimeric L10(L12)X complex. In terms of processing, one or more lysine residues are methylated.

Functionally, forms part of the ribosomal stalk which helps the ribosome interact with GTP-bound translation factors. This chain is Large ribosomal subunit protein uL11, found in Halorhodospira halophila (strain DSM 244 / SL1) (Ectothiorhodospira halophila (strain DSM 244 / SL1)).